An 82-amino-acid chain; its full sequence is UPF0213 protein SSP2268 (82 aa).

Residues 2–77 enclose the GIY-YIG domain; the sequence is DKHYIYIVKC…KTFSRQKKLK (76 aa).

It belongs to the UPF0213 family.

The sequence is that of UPF0213 protein SSP2268 from Staphylococcus saprophyticus subsp. saprophyticus (strain ATCC 15305 / DSM 20229 / NCIMB 8711 / NCTC 7292 / S-41).